The following is a 108-amino-acid chain: Small ribosomal subunit protein bS16 (108 aa).

A disordered region spans residues 82–108 (ESKFSKNTQTENKKPVSKKTTKKSKDN). Residues 96–108 (PVSKKTTKKSKDN) show a composition bias toward basic residues.

This sequence belongs to the bacterial ribosomal protein bS16 family.

The polypeptide is Small ribosomal subunit protein bS16 (Mycoplasma mycoides subsp. mycoides SC (strain CCUG 32753 / NCTC 10114 / PG1)).